The chain runs to 296 residues: Magnetosome protein MamB (296 aa).

The Cytoplasmic segment spans residues 1–12 (MKFENCRDCREE). Residues 1–214 (MKFENCRDCR…GLMDSSVDTE (214 aa)) form a transmembrane domain (TMD) region. A helical transmembrane segment spans residues 13-33 (VVWWAFTADICMTLFKGVLGL). Over 34–83 (MSGSVALVADSLHSGADVVASGVTQLSLKISNKPADERYPFGYGNIQYIS) the chain is Lumenal. A helical membrane pass occupies residues 84–104 (SSIVGSLLLIGASFLMYGSVM). The Cytoplasmic portion of the chain corresponds to 105–112 (KLISGTYE). The helical transmembrane segment at 113-133 (APSIFAAVGASVTVIVNELMY) threads the bilayer. Over 134–164 (RYQICVGNENNSPAIIANAWDNRSDAISSAA) the chain is Lumenal. Residues 165–185 (VMVGVIASVIGFPIADTIAAI) traverse the membrane as a helical segment. At 186–296 (GVSALVGRIG…SPAPAAAARA (111 aa)) the chain is on the cytoplasmic side. The segment at 215 to 296 (LLQTAWQVAM…SPAPAAAARA (82 aa)) is C-terminal domain (CTD).

It belongs to the cation diffusion facilitator (CDF) transporter (TC 2.A.4) family. As to quaternary structure, forms heterodimers with MamM. Probably interacts with MamE.

It is found in the magnetosome membrane. In terms of biological role, plays a dual, essential role in magnetosome formation; required for magnetosome vesicle formation as well as biomineralization. Probably binds and transports iron. Requires heterodimerization with MamM for stability. The sequence is that of Magnetosome protein MamB (mamB) from Paramagnetospirillum magneticum (strain ATCC 700264 / AMB-1) (Magnetospirillum magneticum).